A 426-amino-acid polypeptide reads, in one-letter code: Mannose-1-phosphate guanyltransferase alpha-B (426 aa).

The protein belongs to the transferase hexapeptide repeat family.

The enzyme catalyses alpha-D-mannose 1-phosphate + GTP + H(+) = GDP-alpha-D-mannose + diphosphate. Its pathway is nucleotide-sugar biosynthesis; GDP-alpha-D-mannose biosynthesis; GDP-alpha-D-mannose from alpha-D-mannose 1-phosphate (GTP route): step 1/1. The polypeptide is Mannose-1-phosphate guanyltransferase alpha-B (gmppa-b) (Xenopus laevis (African clawed frog)).